The sequence spans 337 residues: Glyceraldehyde-3-phosphate dehydrogenase 2 (337 aa).

NADP(+)-binding positions include arginine 11–isoleucine 12, aspartate 35, arginine 80, and threonine 122. Residues serine 153–threonine 155, threonine 184, arginine 199, threonine 212–glycine 213, and arginine 235 each bind D-glyceraldehyde 3-phosphate. Cysteine 154 (nucleophile) is an active-site residue. Asparagine 317 contributes to the NADP(+) binding site.

This sequence belongs to the glyceraldehyde-3-phosphate dehydrogenase family. As to quaternary structure, homotetramer.

It localises to the cytoplasm. The catalysed reaction is D-glyceraldehyde 3-phosphate + phosphate + NADP(+) = (2R)-3-phospho-glyceroyl phosphate + NADPH + H(+). The enzyme catalyses D-glyceraldehyde 3-phosphate + phosphate + NAD(+) = (2R)-3-phospho-glyceroyl phosphate + NADH + H(+). The protein operates within carbohydrate biosynthesis; Calvin cycle. Gap2 has a major role in carbon fixation as a component of the Calvin cycle. Catalyzes the oxidative phosphorylation of glyceraldehyde 3-phosphate (G3P) to 1,3-bisphosphoglycerate (BPG) using the cofactor NAD. The first reaction step involves the formation of a hemiacetal intermediate between G3P and a cysteine residue, and this hemiacetal intermediate is then oxidized to a thioester, with concomitant reduction of NAD to NADH. The reduced NADH is then exchanged with the second NAD, and the thioester is attacked by a nucleophilic inorganic phosphate to produce BPG. This is Glyceraldehyde-3-phosphate dehydrogenase 2 (gap2) from Trichormus variabilis (strain ATCC 29413 / PCC 7937) (Anabaena variabilis).